We begin with the raw amino-acid sequence, 481 residues long: Aspartyl/glutamyl-tRNA(Asn/Gln) amidotransferase subunit B (481 aa).

Belongs to the GatB/GatE family. GatB subfamily. Heterotrimer of A, B and C subunits.

It catalyses the reaction L-glutamyl-tRNA(Gln) + L-glutamine + ATP + H2O = L-glutaminyl-tRNA(Gln) + L-glutamate + ADP + phosphate + H(+). The enzyme catalyses L-aspartyl-tRNA(Asn) + L-glutamine + ATP + H2O = L-asparaginyl-tRNA(Asn) + L-glutamate + ADP + phosphate + 2 H(+). Allows the formation of correctly charged Asn-tRNA(Asn) or Gln-tRNA(Gln) through the transamidation of misacylated Asp-tRNA(Asn) or Glu-tRNA(Gln) in organisms which lack either or both of asparaginyl-tRNA or glutaminyl-tRNA synthetases. The reaction takes place in the presence of glutamine and ATP through an activated phospho-Asp-tRNA(Asn) or phospho-Glu-tRNA(Gln). The chain is Aspartyl/glutamyl-tRNA(Asn/Gln) amidotransferase subunit B from Pseudomonas putida (strain ATCC 47054 / DSM 6125 / CFBP 8728 / NCIMB 11950 / KT2440).